Here is a 304-residue protein sequence, read N- to C-terminus: Acetylglutamate kinase (304 aa).

Substrate is bound by residues 71–72 (GG), R93, and N193.

The protein belongs to the acetylglutamate kinase family. ArgB subfamily.

The protein localises to the cytoplasm. It catalyses the reaction N-acetyl-L-glutamate + ATP = N-acetyl-L-glutamyl 5-phosphate + ADP. The protein operates within amino-acid biosynthesis; L-arginine biosynthesis; N(2)-acetyl-L-ornithine from L-glutamate: step 2/4. Catalyzes the ATP-dependent phosphorylation of N-acetyl-L-glutamate. The chain is Acetylglutamate kinase from Streptomyces avermitilis (strain ATCC 31267 / DSM 46492 / JCM 5070 / NBRC 14893 / NCIMB 12804 / NRRL 8165 / MA-4680).